A 230-amino-acid polypeptide reads, in one-letter code: Small ribosomal subunit protein uS3 (230 aa).

Positions 39 to 107 (VRKFLVEKLQ…PAQINIAEIR (69 aa)) constitute a KH type-2 domain.

Belongs to the universal ribosomal protein uS3 family. Part of the 30S ribosomal subunit. Forms a tight complex with proteins S10 and S14.

Functionally, binds the lower part of the 30S subunit head. Binds mRNA in the 70S ribosome, positioning it for translation. The protein is Small ribosomal subunit protein uS3 of Shewanella baltica (strain OS223).